Reading from the N-terminus, the 579-residue chain is 2-isopropylmalate synthase (579 aa).

Positions P40 to D314 constitute a Pyruvate carboxyltransferase domain. Mg(2+)-binding residues include D49, H253, H255, and N289. The tract at residues S456–A579 is regulatory domain.

It belongs to the alpha-IPM synthase/homocitrate synthase family. LeuA type 2 subfamily. Homodimer. The cofactor is Mg(2+).

It is found in the cytoplasm. It carries out the reaction 3-methyl-2-oxobutanoate + acetyl-CoA + H2O = (2S)-2-isopropylmalate + CoA + H(+). The protein operates within amino-acid biosynthesis; L-leucine biosynthesis; L-leucine from 3-methyl-2-oxobutanoate: step 1/4. In terms of biological role, catalyzes the condensation of the acetyl group of acetyl-CoA with 3-methyl-2-oxobutanoate (2-ketoisovalerate) to form 3-carboxy-3-hydroxy-4-methylpentanoate (2-isopropylmalate). The chain is 2-isopropylmalate synthase from Paenarthrobacter aurescens (strain TC1).